Here is a 151-residue protein sequence, read N- to C-terminus: Large ribosomal subunit protein bL9 (151 aa).

The protein belongs to the bacterial ribosomal protein bL9 family.

Its function is as follows. Binds to the 23S rRNA. This is Large ribosomal subunit protein bL9 from Desulfosudis oleivorans (strain DSM 6200 / JCM 39069 / Hxd3) (Desulfococcus oleovorans).